We begin with the raw amino-acid sequence, 503 residues long: Maturase K (503 aa).

It belongs to the intron maturase 2 family. MatK subfamily.

Its subcellular location is the plastid. The protein localises to the chloroplast. Usually encoded in the trnK tRNA gene intron. Probably assists in splicing its own and other chloroplast group II introns. The chain is Maturase K from Cercocarpus betuloides (Mountain mahogany).